The primary structure comprises 1865 residues: Dedicator of cytokinesis protein 1 (1865 aa).

Residues R9 to A70 enclose the SH3 domain. The C2 DOCK-type domain occupies R425–C609. The 411-residue stretch at Y1207–M1617 folds into the DOCKER domain. Disordered regions lie at residues S1619 to P1716 and T1732 to Q1865. Residues P1639–G1666 show a composition bias toward low complexity. The segment covering R1680–K1694 has biased composition (basic and acidic residues). S1681 carries the phosphoserine modification. The interval K1687–K1695 is phosphoinositide-binding. Residues K1695–S1704 show a composition bias toward basic residues. Basic and acidic residues predominate over residues K1705 to P1716. Phosphoserine is present on residues S1743, S1751, S1756, S1761, and S1764. Low complexity predominate over residues S1756 to Q1766. Phosphothreonine occurs at positions 1767 and 1772. Residues A1793–D1819 are interaction with NCK2 second and third SH3 domain (minor). Residues P1799–K1805 carry the SH3-binding; interaction with CRK motif. The segment at L1820–L1836 is interaction with NCK2 third SH3 domain (major). The segment covering P1824 to K1851 has biased composition (pro residues). Residues P1837 to T1852 form an interaction with NCK2 (minor) region. Positions P1838–K1843 match the SH3-binding; interaction with CRK motif. Residues K1855–Q1865 are compositionally biased toward polar residues. S1858 is modified (phosphoserine).

The protein belongs to the DOCK family. As to quaternary structure, interacts with the SH3 domains of CRK and NCK2 via multiple sites. Interacts with nucleotide-free RAC1 via its DOCKER domain. Interacts with ELMO1, ELMO2 and probably ELMO3 via its SH3 domain. Interacts with ADGRB1. Identified in a complex with AUTS2 and ELMO2. In terms of tissue distribution, highly expressed in placenta, lung, kidney, pancreas and ovary. Expressed at intermediate level in thymus, testes and colon.

The protein localises to the cytoplasm. Its subcellular location is the membrane. Functionally, involved in cytoskeletal rearrangements required for phagocytosis of apoptotic cells and cell motility. Along with DOCK1, mediates CRK/CRKL regulation of epithelial and endothelial cell spreading and migration on type IV collagen. Functions as a guanine nucleotide exchange factor (GEF), which activates Rac Rho small GTPases by exchanging bound GDP for free GTP. Its GEF activity may be enhanced by ELMO1. In Homo sapiens (Human), this protein is Dedicator of cytokinesis protein 1 (DOCK1).